Here is a 373-residue protein sequence, read N- to C-terminus: Dual-specificity RNA methyltransferase RlmN (373 aa).

The Proton acceptor role is filled by Glu94. In terms of domain architecture, Radical SAM core spans 100–339 (EDDRATLCVS…VIVRKTRGDD (240 aa)). Cysteines 107 and 344 form a disulfide. 3 residues coordinate [4Fe-4S] cluster: Cys114, Cys118, and Cys121. S-adenosyl-L-methionine is bound by residues 168–169 (GE), Ser200, 222–224 (SIH), and Asn301. Residue Cys344 is the S-methylcysteine intermediate of the active site.

The protein belongs to the radical SAM superfamily. RlmN family. Requires [4Fe-4S] cluster as cofactor.

The protein resides in the cytoplasm. It catalyses the reaction adenosine(2503) in 23S rRNA + 2 reduced [2Fe-2S]-[ferredoxin] + 2 S-adenosyl-L-methionine = 2-methyladenosine(2503) in 23S rRNA + 5'-deoxyadenosine + L-methionine + 2 oxidized [2Fe-2S]-[ferredoxin] + S-adenosyl-L-homocysteine. The catalysed reaction is adenosine(37) in tRNA + 2 reduced [2Fe-2S]-[ferredoxin] + 2 S-adenosyl-L-methionine = 2-methyladenosine(37) in tRNA + 5'-deoxyadenosine + L-methionine + 2 oxidized [2Fe-2S]-[ferredoxin] + S-adenosyl-L-homocysteine. Functionally, specifically methylates position 2 of adenine 2503 in 23S rRNA and position 2 of adenine 37 in tRNAs. m2A2503 modification seems to play a crucial role in the proofreading step occurring at the peptidyl transferase center and thus would serve to optimize ribosomal fidelity. This is Dual-specificity RNA methyltransferase RlmN from Shewanella woodyi (strain ATCC 51908 / MS32).